A 417-amino-acid polypeptide reads, in one-letter code: RH-like protein IIR (417 aa).

A run of 11 helical transmembrane segments spans residues 12–32, 44–64, 77–97, 125–145, 172–192, 203–223, 238–258, 265–285, 287–307, 331–351, and 358–378; these read CLPL…YFFT, LVAS…GFGF, VAFS…LDGF, ISVD…MVLV, IYVF…KPLP, TIPS…WPSF, VFNT…GSSL, ISMS…GTSC, LIPS…ISVG, NFSW…VRHT, and MIGF…TIAL.

This sequence belongs to the ammonium transporter (TC 2.A.49) family. Rh subfamily.

The protein resides in the membrane. May be part of an oligomeric complex which is likely to have a transport or channel function in the erythrocyte membrane. The sequence is that of RH-like protein IIR from Pan troglodytes (Chimpanzee).